Here is a 223-residue protein sequence, read N- to C-terminus: Uridylate kinase (223 aa).

ATP is bound at residue 9 to 10 (GS). UMP is bound at residue G42. ATP contacts are provided by G43 and R47. UMP contacts are provided by residues D64 and 112-118 (VSPGQTT). ATP is bound by residues T138, Y144, and D147.

It belongs to the UMP kinase family. In terms of assembly, homohexamer.

The protein localises to the cytoplasm. It catalyses the reaction UMP + ATP = UDP + ADP. It participates in pyrimidine metabolism; CTP biosynthesis via de novo pathway; UDP from UMP (UMPK route): step 1/1. Its activity is regulated as follows. Inhibited by UTP. Its function is as follows. Catalyzes the reversible phosphorylation of UMP to UDP. This is Uridylate kinase from Methanothrix thermoacetophila (strain DSM 6194 / JCM 14653 / NBRC 101360 / PT) (Methanosaeta thermophila).